A 316-amino-acid chain; its full sequence is HPr kinase/phosphorylase (316 aa).

Residues His-143 and Lys-164 contribute to the active site. Residue 158-165 (GEAGSGKS) participates in ATP binding. Residue Ser-165 coordinates Mg(2+). The active-site Proton acceptor; for phosphorylation activity. Proton donor; for dephosphorylation activity is Asp-182. Positions 206–215 (LEVRGLGVLN) are important for the catalytic mechanism of both phosphorylation and dephosphorylation. A Mg(2+)-binding site is contributed by Glu-207. Residue Arg-251 is part of the active site. The tract at residues 272–277 (PVMPGR) is important for the catalytic mechanism of dephosphorylation.

Belongs to the HPrK/P family. As to quaternary structure, homohexamer. It depends on Mg(2+) as a cofactor.

It catalyses the reaction [HPr protein]-L-serine + ATP = [HPr protein]-O-phospho-L-serine + ADP + H(+). The enzyme catalyses [HPr protein]-O-phospho-L-serine + phosphate + H(+) = [HPr protein]-L-serine + diphosphate. Catalyzes the ATP- as well as the pyrophosphate-dependent phosphorylation of a specific serine residue in HPr, a phosphocarrier protein of the phosphoenolpyruvate-dependent sugar phosphotransferase system (PTS). HprK/P also catalyzes the pyrophosphate-producing, inorganic phosphate-dependent dephosphorylation (phosphorolysis) of seryl-phosphorylated HPr (P-Ser-HPr). This is HPr kinase/phosphorylase from Stenotrophomonas maltophilia (strain R551-3).